Reading from the N-terminus, the 352-residue chain is Putative F-box protein At5g14160 (352 aa).

The region spanning 14-60 (GVDWSELPEDVIRLVLRRLRLSDFHRARAVCSTWCRVWGDCVSKPNQ) is the F-box domain.

The protein is Putative F-box protein At5g14160 of Arabidopsis thaliana (Mouse-ear cress).